A 158-amino-acid chain; its full sequence is MFRIGQGFDVHEFAEGRPLIIGGITIPHEKGLIGHSDADVLLHTIADACLGAIAAGDIGKHFPDTDPAFKDADSAVLLQKVWEFVREQGYELGNLDCTIIAQKPKMAPHIESMRKRISELLETSIDNINVKATTTEKLGFTGREEGIASQAVVLLQKK.

Residues Asp9 and His11 each coordinate a divalent metal cation. Residues 9–11 and 35–36 contribute to the 4-CDP-2-C-methyl-D-erythritol 2-phosphate site; these read DVH and HS. His43 provides a ligand contact to a divalent metal cation. Residues 57–59, 62–66, 101–107, 133–136, Phe140, and Arg143 each bind 4-CDP-2-C-methyl-D-erythritol 2-phosphate; these read DIG, FPDTD, AQKPKMA, and TTTE.

The protein belongs to the IspF family. In terms of assembly, homotrimer. It depends on a divalent metal cation as a cofactor.

The catalysed reaction is 4-CDP-2-C-methyl-D-erythritol 2-phosphate = 2-C-methyl-D-erythritol 2,4-cyclic diphosphate + CMP. The protein operates within isoprenoid biosynthesis; isopentenyl diphosphate biosynthesis via DXP pathway; isopentenyl diphosphate from 1-deoxy-D-xylulose 5-phosphate: step 4/6. Functionally, involved in the biosynthesis of isopentenyl diphosphate (IPP) and dimethylallyl diphosphate (DMAPP), two major building blocks of isoprenoid compounds. Catalyzes the conversion of 4-diphosphocytidyl-2-C-methyl-D-erythritol 2-phosphate (CDP-ME2P) to 2-C-methyl-D-erythritol 2,4-cyclodiphosphate (ME-CPP) with a corresponding release of cytidine 5-monophosphate (CMP). This chain is 2-C-methyl-D-erythritol 2,4-cyclodiphosphate synthase, found in Bacillus thuringiensis subsp. konkukian (strain 97-27).